We begin with the raw amino-acid sequence, 705 residues long: Bifunctional arginine dihydrolase/ornithine cyclodeaminase ArgZ (705 aa).

The segment at 10 to 269 (CPPDHYDVDY…GAAKCLTLRV (260 aa)) is arginine dihydrolase. Residues N22, N71, R90, R139, H168, D170, A258, and C264 each coordinate L-arginine. L-ornithine is bound by residues N22, N71, R90, R139, and H168. H168 acts as the Proton donor/acceptor in catalysis. Positions 258 and 264 each coordinate L-ornithine. The Nucleophile role is filled by C264. The interval 285–695 (SRVIRMEGHL…SLLVRQLQQL (411 aa)) is ornithine cyclodeaminase. The NAD(+) site is built by N525, A526, D604, S636, M637, L638, H639, D657, D680, and V681.

The protein in the N-terminal section; belongs to the DDAH family. It in the C-terminal section; belongs to the AgrE/ArgZ ornithine cyclodeaminase family. As to quaternary structure, homotetramer. Requires NAD(+) as cofactor.

The enzyme catalyses L-arginine + 2 H2O + 2 H(+) = L-ornithine + 2 NH4(+) + CO2. The catalysed reaction is L-ornithine = L-proline + NH4(+). With respect to regulation, arginine dihydrolase activity does not require a metal cofactor. Its function is as follows. Bifunctional enzyme involved in a cyanobacterial arginine utilization pathway that enables cellular adaptation to nitrogen fluctuations. Catalyzes the hydrolysis of arginine to ornithine, with the release of ammonia and carbon dioxide. Then, probably catalyzes the conversion of ornithine to proline, with the release of ammonia. Is highly specific for arginine and cannot hydrolyze citrulline, dimethylarginine and other amino acids. This is Bifunctional arginine dihydrolase/ornithine cyclodeaminase ArgZ from Synechocystis sp. (strain ATCC 27184 / PCC 6803 / Kazusa).